The chain runs to 383 residues: N-acetyldiaminopimelate deacetylase (383 aa).

Residue Asp72 is part of the active site. The Proton acceptor role is filled by Glu131.

It belongs to the peptidase M20A family. N-acetyldiaminopimelate deacetylase subfamily.

The catalysed reaction is N-acetyl-(2S,6S)-2,6-diaminopimelate + H2O = (2S,6S)-2,6-diaminopimelate + acetate. The protein operates within amino-acid biosynthesis; L-lysine biosynthesis via DAP pathway; LL-2,6-diaminopimelate from (S)-tetrahydrodipicolinate (acetylase route): step 3/3. Functionally, catalyzes the conversion of N-acetyl-diaminopimelate to diaminopimelate and acetate. The polypeptide is N-acetyldiaminopimelate deacetylase (Lacticaseibacillus paracasei (strain ATCC 334 / BCRC 17002 / CCUG 31169 / CIP 107868 / KCTC 3260 / NRRL B-441) (Lactobacillus paracasei)).